The sequence spans 144 residues: Ribosome-binding factor A (144 aa).

The disordered stretch occupies residues 120-144; it reads DKRRMAEAGREEDEAAPDDTTEDKA. Positions 129 to 144 are enriched in acidic residues; it reads REEDEAAPDDTTEDKA.

The protein belongs to the RbfA family. As to quaternary structure, monomer. Binds 30S ribosomal subunits, but not 50S ribosomal subunits or 70S ribosomes.

The protein resides in the cytoplasm. One of several proteins that assist in the late maturation steps of the functional core of the 30S ribosomal subunit. Associates with free 30S ribosomal subunits (but not with 30S subunits that are part of 70S ribosomes or polysomes). Required for efficient processing of 16S rRNA. May interact with the 5'-terminal helix region of 16S rRNA. This chain is Ribosome-binding factor A, found in Aeromonas salmonicida (strain A449).